A 276-amino-acid chain; its full sequence is Foldase protein PrsA (276 aa).

An N-terminal signal peptide occupies residues 1 to 18 (MRKWMIVAAVAAVFGLSA). Cys-19 carries N-palmitoyl cysteine lipidation. Cys-19 is lipidated: S-diacylglycerol cysteine. One can recognise a PpiC domain in the interval 133–223 (KPKIRASHIL…YGYHIIKVTD (91 aa)).

Belongs to the PrsA family.

Its subcellular location is the cell membrane. The enzyme catalyses [protein]-peptidylproline (omega=180) = [protein]-peptidylproline (omega=0). Plays a major role in protein secretion by helping the post-translocational extracellular folding of several secreted proteins. This chain is Foldase protein PrsA, found in Geobacillus sp. (strain WCH70).